The chain runs to 64 residues: Bacteriocin glycocin F (64 aa).

Residues 1 to 21 (MSKLVKTLTISEISKAQNNGG) form the signal peptide. 2 disulfide bridges follow: C26–C49 and C33–C42. O-linked (GlcNAc) serine glycosylation occurs at S39. The S-linked (GlcNAc) cysteine glycan is linked to C64.

It localises to the secreted. In terms of biological role, has antibacterial activity against L.plantarum ATCC 8014. In purified form, the activity is bacteriostatic (IC(50)=2 nM) rather than bactericidal. This is Bacteriocin glycocin F from Lactiplantibacillus plantarum (Lactobacillus plantarum).